The primary structure comprises 882 residues: Translation initiation factor IF-2 (882 aa).

Residues 38–294 (IEDSQASWVK…KSKHKRKKEN (257 aa)) form a disordered region. Basic and acidic residues-rich tracts occupy residues 66 to 76 (TRDEAVKKHSG), 109 to 128 (GRRE…ERHS), and 207 to 219 (PDNK…DAKR). Residues 282–292 (PGRKSKHKRKK) show a composition bias toward basic residues. Residues 383 to 556 (ARPPVVTIMG…EMNEIRANPD (174 aa)) form the tr-type G domain. The interval 392–399 (GHVDHGKT) is G1. 392–399 (GHVDHGKT) provides a ligand contact to GTP. The tract at residues 417-421 (GITQH) is G2. The G3 stretch occupies residues 438–441 (DTPG). Residues 438-442 (DTPGH) and 492-495 (NKID) contribute to the GTP site. The interval 492 to 495 (NKID) is G4. Residues 528 to 530 (SAK) are G5.

Belongs to the TRAFAC class translation factor GTPase superfamily. Classic translation factor GTPase family. IF-2 subfamily.

It is found in the cytoplasm. In terms of biological role, one of the essential components for the initiation of protein synthesis. Protects formylmethionyl-tRNA from spontaneous hydrolysis and promotes its binding to the 30S ribosomal subunits. Also involved in the hydrolysis of GTP during the formation of the 70S ribosomal complex. The sequence is that of Translation initiation factor IF-2 from Syntrophomonas wolfei subsp. wolfei (strain DSM 2245B / Goettingen).